A 94-amino-acid chain; its full sequence is Small ribosomal subunit protein uS19 (94 aa).

Belongs to the universal ribosomal protein uS19 family.

Its function is as follows. Protein S19 forms a complex with S13 that binds strongly to the 16S ribosomal RNA. This is Small ribosomal subunit protein uS19 from Clostridium botulinum (strain Langeland / NCTC 10281 / Type F).